The primary structure comprises 257 residues: Protein MoaE (257 aa).

Val-6–Val-29 is an NAD(+) binding site. The tract at residues Leu-75–Ala-96 is disordered. Ser-132 is a binding site for substrate. The active-site Proton acceptor is Tyr-145.

The protein belongs to the short-chain dehydrogenases/reductases (SDR) family.

Functionally, might catalyze the conversion of monoamine compounds or their metabolites. This is Protein MoaE (moaE) from Klebsiella aerogenes (Enterobacter aerogenes).